The chain runs to 372 residues: 3-dehydroquinate synthase (372 aa).

NAD(+) is bound by residues 116 to 120 (GVVGD), 140 to 141 (TT), K153, K162, and 180 to 183 (TLKT). Residues E195, H260, and H277 each contribute to the Zn(2+) site.

This sequence belongs to the sugar phosphate cyclases superfamily. Dehydroquinate synthase family. It depends on NAD(+) as a cofactor. Co(2+) serves as cofactor. Requires Zn(2+) as cofactor.

It localises to the cytoplasm. The catalysed reaction is 7-phospho-2-dehydro-3-deoxy-D-arabino-heptonate = 3-dehydroquinate + phosphate. Its pathway is metabolic intermediate biosynthesis; chorismate biosynthesis; chorismate from D-erythrose 4-phosphate and phosphoenolpyruvate: step 2/7. Functionally, catalyzes the conversion of 3-deoxy-D-arabino-heptulosonate 7-phosphate (DAHP) to dehydroquinate (DHQ). The polypeptide is 3-dehydroquinate synthase (Prochlorococcus marinus (strain MIT 9313)).